Reading from the N-terminus, the 180-residue chain is Translation initiation factor IF-3 (180 aa).

This sequence belongs to the IF-3 family. As to quaternary structure, monomer.

Its subcellular location is the cytoplasm. In terms of biological role, IF-3 binds to the 30S ribosomal subunit and shifts the equilibrium between 70S ribosomes and their 50S and 30S subunits in favor of the free subunits, thus enhancing the availability of 30S subunits on which protein synthesis initiation begins. The chain is Translation initiation factor IF-3 from Xylella fastidiosa (strain 9a5c).